Here is a 242-residue protein sequence, read N- to C-terminus: ATP synthase subunit 4, mitochondrial (242 aa).

Residues 1-35 constitute a mitochondrion transit peptide; sequence MSFRALTMRSAVARTALNNTIRSARVATPYLGIRH.

The protein belongs to the eukaryotic ATPase B chain family. F-type ATPases have 2 components, CF(1) - the catalytic core - and CF(0) - the membrane proton channel. In yeast, the dimeric form of ATP synthase consists of 17 polypeptides: alpha, beta, gamma, delta, epsilon, 4 (B), 5 (OSCP), 6 (A), 8, 9 (C), d, E (Tim11), f, g, h, i/j and k.

The protein localises to the mitochondrion. It is found in the mitochondrion inner membrane. Functionally, mitochondrial membrane ATP synthase (F(1)F(0) ATP synthase or Complex V) produces ATP from ADP in the presence of a proton gradient across the membrane which is generated by electron transport complexes of the respiratory chain. F-type ATPases consist of two structural domains, F(1) - containing the extramembraneous catalytic core, and F(0) - containing the membrane proton channel, linked together by a central stalk and a peripheral stalk. During catalysis, ATP synthesis in the catalytic domain of F(1) is coupled via a rotary mechanism of the central stalk subunits to proton translocation. Part of the complex F(0) domain and the peripheric stalk, which acts as a stator to hold the catalytic alpha(3)beta(3) subcomplex and subunit a/ATP6 static relative to the rotary elements. The chain is ATP synthase subunit 4, mitochondrial (ATP4) from Candida glabrata (strain ATCC 2001 / BCRC 20586 / JCM 3761 / NBRC 0622 / NRRL Y-65 / CBS 138) (Yeast).